Consider the following 711-residue polypeptide: Serine/threonine-protein kinase ATG1b (711 aa).

Residues 20–277 (YAVGRQIGSG…FEEFFHHPFL (258 aa)) form the Protein kinase domain. ATP-binding positions include 26-34 (IGSGSFSVV) and Lys49. The active-site Proton acceptor is the Asp142. 2 disordered regions span residues 318-342 (LPFF…TSPM) and 383-419 (FEGH…SMDQ). Positions 383 to 393 (FEGHRLSDRSQ) are enriched in basic and acidic residues. Polar residues predominate over residues 394-410 (FKPSSLPDSRSFSTQGR). The AIM (Atg8-family-interacting motif) motif lies at 421-424 (YVLI).

Belongs to the protein kinase superfamily. Ser/Thr protein kinase family.

Its subcellular location is the cytoplasmic vesicle. It localises to the autophagosome. In terms of biological role, serine/threonine protein kinase involved in autophagy. The ATG1-ATG13 protein kinase complex regulates downstream events required for autophagosome enclosure and/or vacuolar delivery. The sequence is that of Serine/threonine-protein kinase ATG1b from Arabidopsis thaliana (Mouse-ear cress).